The following is a 274-amino-acid chain: Large ribosomal subunit protein uL2cz/uL2cy (274 aa).

The interval 224–274 (NPVDHPHGGGEGRAPIGRKKPTTPWGYPALGRRSRKRNKYSDNLILRRRSK) is disordered.

Belongs to the universal ribosomal protein uL2 family. In terms of assembly, part of the 50S ribosomal subunit.

It localises to the plastid. Its subcellular location is the chloroplast. The sequence is that of Large ribosomal subunit protein uL2cz/uL2cy (rpl2-A) from Panax ginseng (Korean ginseng).